The primary structure comprises 411 residues: ATP-dependent Clp protease ATP-binding subunit ClpX (411 aa).

Positions 1-49 (MSDRDIRCSFCGRTQKEVKKLIAGPGVYICDECVKLAYDIIEEDEEEDV) constitute a ClpX-type ZB domain. Zn(2+) is bound by residues Cys8, Cys11, Cys30, and Cys33. Position 115–122 (115–122 (PTGVGKTL)) interacts with ATP.

The protein belongs to the ClpX chaperone family. Component of the ClpX-ClpP complex. Forms a hexameric ring that, in the presence of ATP, binds to fourteen ClpP subunits assembled into a disk-like structure with a central cavity, resembling the structure of eukaryotic proteasomes.

Its function is as follows. ATP-dependent specificity component of the Clp protease. It directs the protease to specific substrates. Can perform chaperone functions in the absence of ClpP. The chain is ATP-dependent Clp protease ATP-binding subunit ClpX from Dictyoglomus thermophilum (strain ATCC 35947 / DSM 3960 / H-6-12).